The following is a 494-amino-acid chain: Ketol-acid reductoisomerase (NADP(+)) (494 aa).

The KARI N-terminal Rossmann domain occupies 14–208; sequence LDQLGRCRFM…GGHRAGCLAS (195 aa). NADP(+) contacts are provided by residues 45-48, R68, R76, S78, and 108-110; these read CGAQ and DKQ. H132 is an active-site residue. An NADP(+)-binding site is contributed by G158. 2 KARI C-terminal knotted domains span residues 209–344 and 345–487; these read SFVA…NYPT and TDVK…MKDM. D217, E221, E389, and E393 together coordinate Mg(2+). Position 414 (S414) interacts with substrate.

This sequence belongs to the ketol-acid reductoisomerase family. Mg(2+) is required as a cofactor.

The catalysed reaction is (2R)-2,3-dihydroxy-3-methylbutanoate + NADP(+) = (2S)-2-acetolactate + NADPH + H(+). It carries out the reaction (2R,3R)-2,3-dihydroxy-3-methylpentanoate + NADP(+) = (S)-2-ethyl-2-hydroxy-3-oxobutanoate + NADPH + H(+). It functions in the pathway amino-acid biosynthesis; L-isoleucine biosynthesis; L-isoleucine from 2-oxobutanoate: step 2/4. It participates in amino-acid biosynthesis; L-valine biosynthesis; L-valine from pyruvate: step 2/4. Functionally, involved in the biosynthesis of branched-chain amino acids (BCAA). Catalyzes an alkyl-migration followed by a ketol-acid reduction of (S)-2-acetolactate (S2AL) to yield (R)-2,3-dihydroxy-isovalerate. In the isomerase reaction, S2AL is rearranged via a Mg-dependent methyl migration to produce 3-hydroxy-3-methyl-2-ketobutyrate (HMKB). In the reductase reaction, this 2-ketoacid undergoes a metal-dependent reduction by NADPH to yield (R)-2,3-dihydroxy-isovalerate. In Vibrio cholerae serotype O1 (strain ATCC 39541 / Classical Ogawa 395 / O395), this protein is Ketol-acid reductoisomerase (NADP(+)).